Reading from the N-terminus, the 400-residue chain is Acetate kinase (400 aa).

Residue Asn-10 participates in Mg(2+) binding. Position 17 (Lys-17) interacts with ATP. Substrate is bound at residue Arg-91. The active-site Proton donor/acceptor is the Asp-150. ATP contacts are provided by residues 210–214, 285–287, and 333–337; these read HLGNG, DCR, and GIGEN. A Mg(2+)-binding site is contributed by Glu-387.

This sequence belongs to the acetokinase family. As to quaternary structure, homodimer. The cofactor is Mg(2+). Mn(2+) serves as cofactor.

The protein resides in the cytoplasm. It catalyses the reaction acetate + ATP = acetyl phosphate + ADP. It participates in metabolic intermediate biosynthesis; acetyl-CoA biosynthesis; acetyl-CoA from acetate: step 1/2. In terms of biological role, catalyzes the formation of acetyl phosphate from acetate and ATP. Can also catalyze the reverse reaction. The polypeptide is Acetate kinase (Erwinia tasmaniensis (strain DSM 17950 / CFBP 7177 / CIP 109463 / NCPPB 4357 / Et1/99)).